Consider the following 119-residue polypeptide: uncharacterized protein (119 aa).

Transmembrane regions (helical) follow at residues 52 to 72 (IVLF…VINI) and 88 to 108 (VLFS…IFLI).

The protein resides in the membrane. This is an uncharacterized protein from Dictyostelium discoideum (Social amoeba).